The chain runs to 85 residues: MNYLVMISLALLFMTGVESIKDGYIVDDRNCTYFCGTKSYCNGECTKLKGESGYCQWASPYGNACYCYKLPDHVRTKGPGRCKGR.

Positions 1–19 (MNYLVMISLALLFMTGVES) are cleaved as a signal peptide. One can recognise an LCN-type CS-alpha/beta domain in the interval 21–83 (KDGYIVDDRN…VRTKGPGRCK (63 aa)). Disulfide bonds link Cys-31–Cys-82, Cys-35–Cys-55, Cys-41–Cys-65, and Cys-45–Cys-67. Lys-83 is modified (lysine amide).

The protein belongs to the long (4 C-C) scorpion toxin superfamily. Sodium channel inhibitor family. Alpha subfamily. Expressed by the venom gland.

The protein resides in the secreted. Alpha toxins bind voltage-independently at site-3 of sodium channels (Nav) and inhibit the inactivation of the activated channels, thereby blocking neuronal transmission. This is Alpha-toxin Ac2 from Androctonus crassicauda (Arabian fat-tailed scorpion).